We begin with the raw amino-acid sequence, 369 residues long: Dihydroorotate dehydrogenase (quinone) (369 aa).

FMN-binding positions include 66–70 and threonine 90; that span reads AGFDK. Residue lysine 70 coordinates substrate. 115–119 serves as a coordination point for substrate; it reads NRMGF. 2 residues coordinate FMN: asparagine 143 and asparagine 176. A substrate-binding site is contributed by asparagine 176. Serine 179 serves as the catalytic Nucleophile. Position 181 (asparagine 181) interacts with substrate. Residues lysine 217 and threonine 245 each contribute to the FMN site. 246 to 247 contacts substrate; sequence NT. Residues glycine 271, glycine 300, and 321 to 322 contribute to the FMN site; that span reads YT.

It belongs to the dihydroorotate dehydrogenase family. Type 2 subfamily. In terms of assembly, monomer. It depends on FMN as a cofactor.

The protein resides in the cell membrane. The enzyme catalyses (S)-dihydroorotate + a quinone = orotate + a quinol. The protein operates within pyrimidine metabolism; UMP biosynthesis via de novo pathway; orotate from (S)-dihydroorotate (quinone route): step 1/1. Catalyzes the conversion of dihydroorotate to orotate with quinone as electron acceptor. The protein is Dihydroorotate dehydrogenase (quinone) of Nocardia farcinica (strain IFM 10152).